The chain runs to 321 residues: Olfactory receptor 52N4 (321 aa).

The Extracellular segment spans residues 1–27 (MLTLNKTDLIPASFILNGVPGLEDTQL). Asparagine 5 carries N-linked (GlcNAc...) asparagine glycosylation. The chain crosses the membrane as a helical span at residues 28 to 48 (WISFPFCSMYVVAMVGNCGLL). The Cytoplasmic segment spans residues 49-56 (YLIHYEDA). A helical membrane pass occupies residues 57 to 77 (LHKPMYYFLAMLSFTDLVMCS). Topologically, residues 78–101 (STIPKALCIFWFHLKDIGFDECLV) are extracellular. A disulfide bond links cysteine 99 and cysteine 191. A helical membrane pass occupies residues 102-122 (QMFFTHTFTGMESGVLMLMAL). Residues 123 to 141 (DRYVAICYPLRYSTILTNP) are Cytoplasmic-facing. A helical membrane pass occupies residues 142–162 (VIAKVGTATFLRGVLLIIPFT). Residues 163-198 (FLTKLLPYCRGNILPHTYCDHMSVAKLSCGNVKVNA) are Extracellular-facing. A helical transmembrane segment spans residues 199–219 (IYGLMVALLIWGFDILCITNS). Over 220 to 239 (YTMILRAVVSLSSADARQKA) the chain is Cytoplasmic. Residues 240–260 (FNTCTAHICAIVFSYTPAFFS) traverse the membrane as a helical segment. Residues 261-276 (FFSHRFGEHIIPPSCH) lie on the Extracellular side of the membrane. Residues 277-297 (IIVANIYLLLPPTMNPIVYGV) form a helical membrane-spanning segment. Over 298–321 (KTKQIRDCVIRILSGSKDTKSYSM) the chain is Cytoplasmic.

The protein belongs to the G-protein coupled receptor 1 family.

The protein localises to the cell membrane. Its function is as follows. Odorant receptor. This Homo sapiens (Human) protein is Olfactory receptor 52N4 (OR52N4).